A 333-amino-acid polypeptide reads, in one-letter code: MVMAAVIHKKGGPDNFVWEEVKVGSPGPGQVRLRNTAIGVNFLDTYHRAGIPHPLVVGEPPIVVGFEAAAVVEEVGPGVTDFTVGERVCTCLPPLGAYSQERLYPAEKLIKVPKDLDLDDVHLAGLMLKGMTAQYLLHQTHKVKPGDYVLIHAAAGGMGHIMVPWARHLGATVIGTVSTEEKAETARKLGCHHTINYSTQDFAEVVREITGGKGVDVVYDSIGKDTLQKSLDCLRPRGMCAAYGHASGVADPIRVVEDLGVRGSLFITRPALWHYMSNRSEIDEGSKCLFDAVKAGVLHSSVAKTFPLREAAAAHKYMGGRQTIGSIVLLPQA.

153–159 lines the NADP(+) pocket; the sequence is AAAGGMG.

Belongs to the zinc-containing alcohol dehydrogenase family.

It catalyses the reaction (S)-2-chloropropanoate + NADP(+) = 2-chloroacrylate + NADPH + H(+). Involved in the degradation of unsaturated organohalogen compounds. Catalyzes the NADPH-dependent reduction of the carbon-carbon double bond of 2-chloroacrylate to produce (S)-2-chloropropionate, which is probably further metabolized to (R)-lactate by (S)-2-haloacid dehalogenase. Can also use 2-bromoacrylate as substrate. Does not act on acrylate, methacrylate, 1,4-benzoquinone and 1,4-naphthoquinone. The chain is 2-haloacrylate reductase from Burkholderia sp.